The following is a 434-amino-acid chain: Trigger factor (434 aa).

Residues 160–245 (GDKVKMNFVG…LTEVQAANLP (86 aa)) enclose the PPIase FKBP-type domain.

Belongs to the FKBP-type PPIase family. Tig subfamily.

It localises to the cytoplasm. The enzyme catalyses [protein]-peptidylproline (omega=180) = [protein]-peptidylproline (omega=0). In terms of biological role, involved in protein export. Acts as a chaperone by maintaining the newly synthesized protein in an open conformation. Functions as a peptidyl-prolyl cis-trans isomerase. The sequence is that of Trigger factor from Shewanella baltica (strain OS223).